The sequence spans 1382 residues: DNA-directed RNA polymerase subunit beta (1382 aa).

The protein belongs to the RNA polymerase beta chain family. As to quaternary structure, the RNAP catalytic core consists of 2 alpha, 1 beta, 1 beta' and 1 omega subunit. When a sigma factor is associated with the core the holoenzyme is formed, which can initiate transcription.

It catalyses the reaction RNA(n) + a ribonucleoside 5'-triphosphate = RNA(n+1) + diphosphate. DNA-dependent RNA polymerase catalyzes the transcription of DNA into RNA using the four ribonucleoside triphosphates as substrates. The sequence is that of DNA-directed RNA polymerase subunit beta from Paracoccus denitrificans (strain Pd 1222).